Reading from the N-terminus, the 481-residue chain is Cysteine--tRNA ligase (481 aa).

A Zn(2+)-binding site is contributed by Cys-43. Positions 45 to 55 match the 'HIGH' region motif; it reads ATVQGLPHIGH. Zn(2+)-binding residues include Cys-221, His-246, and Glu-250. The 'KMSKS' region signature appears at 277–281; sequence KMSKS. Lys-280 provides a ligand contact to ATP.

Belongs to the class-I aminoacyl-tRNA synthetase family. Monomer. Requires Zn(2+) as cofactor.

It is found in the cytoplasm. It catalyses the reaction tRNA(Cys) + L-cysteine + ATP = L-cysteinyl-tRNA(Cys) + AMP + diphosphate. The chain is Cysteine--tRNA ligase from Mycobacterium sp. (strain JLS).